The following is a 361-amino-acid chain: tRNA-specific 2-thiouridylase MnmA (361 aa).

ATP contacts are provided by residues glycine 8–serine 15 and methionine 34. Residues asparagine 94–aspartate 96 are interaction with target base in tRNA. Cysteine 99 (nucleophile) is an active-site residue. A disulfide bond links cysteine 99 and cysteine 195. Glycine 123 contacts ATP. Residues lysine 145–glutamine 147 are interaction with tRNA. Residue cysteine 195 is the Cysteine persulfide intermediate of the active site. The segment at arginine 307–tyrosine 308 is interaction with tRNA.

It belongs to the MnmA/TRMU family.

Its subcellular location is the cytoplasm. The catalysed reaction is S-sulfanyl-L-cysteinyl-[protein] + uridine(34) in tRNA + AH2 + ATP = 2-thiouridine(34) in tRNA + L-cysteinyl-[protein] + A + AMP + diphosphate + H(+). In terms of biological role, catalyzes the 2-thiolation of uridine at the wobble position (U34) of tRNA, leading to the formation of s(2)U34. The polypeptide is tRNA-specific 2-thiouridylase MnmA (Legionella pneumophila subsp. pneumophila (strain Philadelphia 1 / ATCC 33152 / DSM 7513)).